Consider the following 335-residue polypeptide: Tryptophan--tRNA ligase (335 aa).

ATP is bound by residues 13–15 and 21–22; these read QPS and GN. The 'HIGH' region signature appears at 14-22; it reads PSGELTIGN. D138 contributes to the L-tryptophan binding site. ATP contacts are provided by residues 150 to 152, I189, and 198 to 202; these read GKD and KMSKS. The 'KMSKS' region motif lies at 198–202; it reads KMSKS.

It belongs to the class-I aminoacyl-tRNA synthetase family. Homodimer.

The protein localises to the cytoplasm. The enzyme catalyses tRNA(Trp) + L-tryptophan + ATP = L-tryptophyl-tRNA(Trp) + AMP + diphosphate + H(+). Its function is as follows. Catalyzes the attachment of tryptophan to tRNA(Trp). This Clostridium acetobutylicum (strain ATCC 824 / DSM 792 / JCM 1419 / IAM 19013 / LMG 5710 / NBRC 13948 / NRRL B-527 / VKM B-1787 / 2291 / W) protein is Tryptophan--tRNA ligase.